Reading from the N-terminus, the 220-residue chain is Nucleoside diphosphate kinase, mitochondrial (220 aa).

Residues M1–C57 constitute a mitochondrion transit peptide. The ATP site is built by K80, F128, R156, T162, R173, and N183. H186 serves as the catalytic Pros-phosphohistidine intermediate.

It belongs to the NDK family. Requires Mg(2+) as cofactor.

The protein resides in the mitochondrion intermembrane space. The catalysed reaction is a 2'-deoxyribonucleoside 5'-diphosphate + ATP = a 2'-deoxyribonucleoside 5'-triphosphate + ADP. The enzyme catalyses a ribonucleoside 5'-diphosphate + ATP = a ribonucleoside 5'-triphosphate + ADP. Functionally, major role in the synthesis of nucleoside triphosphates other than ATP. The ATP gamma phosphate is transferred to the NDP beta phosphate via a ping-pong mechanism, using a phosphorylated active-site intermediate. This is Nucleoside diphosphate kinase, mitochondrial (ndkM) from Dictyostelium discoideum (Social amoeba).